A 105-amino-acid polypeptide reads, in one-letter code: Large ribosomal subunit protein uL24 (105 aa).

This sequence belongs to the universal ribosomal protein uL24 family. Part of the 50S ribosomal subunit.

Its function is as follows. One of two assembly initiator proteins, it binds directly to the 5'-end of the 23S rRNA, where it nucleates assembly of the 50S subunit. In terms of biological role, one of the proteins that surrounds the polypeptide exit tunnel on the outside of the subunit. The polypeptide is Large ribosomal subunit protein uL24 (Lachnoclostridium phytofermentans (strain ATCC 700394 / DSM 18823 / ISDg) (Clostridium phytofermentans)).